The primary structure comprises 533 residues: D-3-phosphoglycerate dehydrogenase (533 aa).

At A2 the chain carries N-acetylalanine. S14 is modified (phosphoserine). An N6-acetyllysine modification is found at K58. Residues T78, R155–I156, D175, T207, C234–R236, and D260 each bind NAD(+). T78 carries the post-translational modification Phosphothreonine. R236 is a catalytic residue. E265 is a catalytic residue. H283 acts as the Proton donor in catalysis. H283–A286 contributes to the NAD(+) binding site.

It belongs to the D-isomer specific 2-hydroxyacid dehydrogenase family. As to quaternary structure, homotetramer.

The catalysed reaction is (2R)-3-phosphoglycerate + NAD(+) = 3-phosphooxypyruvate + NADH + H(+). It catalyses the reaction (R)-2-hydroxyglutarate + NAD(+) = 2-oxoglutarate + NADH + H(+). The enzyme catalyses (S)-malate + NAD(+) = oxaloacetate + NADH + H(+). It participates in amino-acid biosynthesis; L-serine biosynthesis; L-serine from 3-phospho-D-glycerate: step 1/3. Its function is as follows. Catalyzes the reversible oxidation of 3-phospho-D-glycerate to 3-phosphonooxypyruvate, the first step of the phosphorylated L-serine biosynthesis pathway. Also catalyzes the reversible oxidation of 2-hydroxyglutarate to 2-oxoglutarate and the reversible oxidation of (S)-malate to oxaloacetate. This Sus scrofa (Pig) protein is D-3-phosphoglycerate dehydrogenase (PHGDH).